Consider the following 848-residue polypeptide: ATP-dependent Clp protease ATP-binding subunit ClpC1 (848 aa).

Residues 2–144 (FERFTDRARR…RQQVIQLLSG (143 aa)) form the Clp R domain. Repeat stretches follow at residues 5-70 (FTDR…IGQG) and 80-144 (FTPR…LLSG). Positions 171–418 (LDQFGRNLTA…RMRIRRMTAP (248 aa)) are i. Residue 216–223 (GEPGVGKT) coordinates ATP. Residues 425–460 (DEKIAEARREKESAIDAQDFEKAASLRDREKTLVAQ) form the UVR domain. The tract at residues 479–670 (VDDEQIAEVL…VLIFTSNLGT (192 aa)) is II. Position 553 to 560 (553 to 560 (GPSGVGKT)) interacts with ATP. The interval 821–848 (TGTRKPPAEPDLAKAGAHSAGGPEPAAR) is disordered.

This sequence belongs to the ClpA/ClpB family. ClpC subfamily.

Its function is as follows. ATP-dependent specificity component of the Clp protease. It directs the protease to specific substrates. Can perform chaperone functions in the absence of ClpP. Degrades anti-sigma-E factor RseA in the presence of ClpP2. In Mycobacterium tuberculosis (strain ATCC 25618 / H37Rv), this protein is ATP-dependent Clp protease ATP-binding subunit ClpC1 (clpC1).